Consider the following 119-residue polypeptide: Ribonuclease P protein component (119 aa).

Belongs to the RnpA family. Consists of a catalytic RNA component (M1 or rnpB) and a protein subunit.

It carries out the reaction Endonucleolytic cleavage of RNA, removing 5'-extranucleotides from tRNA precursor.. Its function is as follows. RNaseP catalyzes the removal of the 5'-leader sequence from pre-tRNA to produce the mature 5'-terminus. It can also cleave other RNA substrates such as 4.5S RNA. The protein component plays an auxiliary but essential role in vivo by binding to the 5'-leader sequence and broadening the substrate specificity of the ribozyme. The sequence is that of Ribonuclease P protein component from Nitrosococcus oceani (strain ATCC 19707 / BCRC 17464 / JCM 30415 / NCIMB 11848 / C-107).